A 696-amino-acid chain; its full sequence is Protein OS-9 homolog (696 aa).

An N-terminal signal peptide occupies residues 1 to 15 (MLVVAFASLLGAARA). N-linked (GlcNAc...) asparagine glycans are attached at residues asparagine 35, asparagine 46, and asparagine 68. In terms of domain architecture, MRH spans 106 to 224 (NQCLVSQNGF…QVIVPDLCQL (119 aa)). Cysteine 108 and cysteine 121 are joined by a disulfide. Residues tryptophan 116, glutamine 128, aspartate 178, arginine 184, glutamate 206, and tyrosine 212 each coordinate a mannooligosaccharide derivative. 2 disulfides stabilise this stretch: cysteine 177-cysteine 210 and cysteine 192-cysteine 222. 3 N-linked (GlcNAc...) asparagine glycosylation sites follow: asparagine 276, asparagine 290, and asparagine 372. Disordered regions lie at residues 450–600 (IEAS…DNSD) and 667–696 (TLGN…DDEL). Residues 458 to 467 (TKASESTPVS) show a composition bias toward polar residues. A compositionally biased stretch (basic and acidic residues) spans 482–498 (RSRDKEEYFKENEKQGE). Polar residues-rich tracts occupy residues 499–518 (ENNA…GTIS), 528–553 (NQKQ…SAND), and 585–597 (NIDN…TLND). N-linked (GlcNAc...) asparagine glycosylation occurs at asparagine 588. Residues 685–696 (ESDRNGVIDDEL) are compositionally biased toward basic and acidic residues.

The protein belongs to the OS-9 family. As to quaternary structure, interacts with missfolded ER lumenal proteins.

Its subcellular location is the endoplasmic reticulum membrane. Functionally, lectin involved in the quality control of the secretory pathway. As a member of the endoplasmic reticulum-associated degradation lumenal (ERAD-L) surveillance system, targets misfolded endoplasmic reticulum lumenal glycoproteins for degradation. The sequence is that of Protein OS-9 homolog (YOS9) from Candida glabrata (strain ATCC 2001 / BCRC 20586 / JCM 3761 / NBRC 0622 / NRRL Y-65 / CBS 138) (Yeast).